The chain runs to 399 residues: Elongation factor Tu (399 aa).

Residues 10–209 form the tr-type G domain; the sequence is KPHVNIGTIG…AVDEYIPEPT (200 aa). The tract at residues 19–26 is G1; that stretch reads GHVDHGKT. 19–26 provides a ligand contact to GTP; the sequence is GHVDHGKT. Threonine 26 lines the Mg(2+) pocket. The interval 60 to 64 is G2; the sequence is GITIA. The segment at 81 to 84 is G3; it reads DCPG. GTP contacts are provided by residues 81–85 and 136–139; these read DCPGH and NKED. The segment at 136–139 is G4; that stretch reads NKED. The G5 stretch occupies residues 174-176; sequence SAK.

Belongs to the TRAFAC class translation factor GTPase superfamily. Classic translation factor GTPase family. EF-Tu/EF-1A subfamily. As to quaternary structure, monomer.

It is found in the cytoplasm. The enzyme catalyses GTP + H2O = GDP + phosphate + H(+). Functionally, GTP hydrolase that promotes the GTP-dependent binding of aminoacyl-tRNA to the A-site of ribosomes during protein biosynthesis. This is Elongation factor Tu from Sulfurimonas denitrificans (strain ATCC 33889 / DSM 1251) (Thiomicrospira denitrificans (strain ATCC 33889 / DSM 1251)).